A 265-amino-acid polypeptide reads, in one-letter code: S-adenosylmethionine decarboxylase proenzyme (265 aa).

Ser114 acts as the Schiff-base intermediate with substrate; via pyruvic acid in catalysis. The residue at position 114 (Ser114) is a Pyruvic acid (Ser); by autocatalysis. Residue His119 is the Proton acceptor; for processing activity of the active site. The Proton donor; for catalytic activity role is filled by Cys142.

The protein belongs to the prokaryotic AdoMetDC family. Type 2 subfamily. Heterooctamer of four alpha and four beta chains arranged as a tetramer of alpha/beta heterodimers. The cofactor is pyruvate. Post-translationally, is synthesized initially as an inactive proenzyme. Formation of the active enzyme involves a self-maturation process in which the active site pyruvoyl group is generated from an internal serine residue via an autocatalytic post-translational modification. Two non-identical subunits are generated from the proenzyme in this reaction, and the pyruvate is formed at the N-terminus of the alpha chain, which is derived from the carboxyl end of the proenzyme. The post-translation cleavage follows an unusual pathway, termed non-hydrolytic serinolysis, in which the side chain hydroxyl group of the serine supplies its oxygen atom to form the C-terminus of the beta chain, while the remainder of the serine residue undergoes an oxidative deamination to produce ammonia and the pyruvoyl group blocking the N-terminus of the alpha chain.

The catalysed reaction is S-adenosyl-L-methionine + H(+) = S-adenosyl 3-(methylsulfanyl)propylamine + CO2. It participates in amine and polyamine biosynthesis; S-adenosylmethioninamine biosynthesis; S-adenosylmethioninamine from S-adenosyl-L-methionine: step 1/1. Its function is as follows. Catalyzes the decarboxylation of S-adenosylmethionine to S-adenosylmethioninamine (dcAdoMet), the propylamine donor required for the synthesis of the polyamines spermine and spermidine from the diamine putrescine. This is S-adenosylmethionine decarboxylase proenzyme from Buchnera aphidicola subsp. Acyrthosiphon pisum (strain 5A).